A 458-amino-acid polypeptide reads, in one-letter code: MEFDTIAAISTALGEGAIAIVRVSGDDAVEKVNRIFKGKDLTEVPSHTIHYGHIVDLDTNQVIEEVMVSIMRAPRTFTRENIVEINCHGGLVSVNKVLQLILAQGVRLAEPGEFTKRAFLNGRIDLSQAEAVMDLIRAKTDRAMNVAINQMEGRLSKLIGRLRQDILETLAHVEVNIDYPEYDDVEEMTHNILIEKATHVRSEIAKILETSKQGKILREGIATAIIGRPNVGKSSLLNSLVQEKKAIVTDIAGTTRDVIEEYVNVRGVPLKLIDTAGIRETEDVVERIGVERSKEMMSQADLVLVVVNYSEALTNEDEELFRAVQGKDFIVIVNKTDLPQAIDMERVIELAAGNRVITTSLIEEQGIDELEKAIADLFFEGTIDSADVTYVSNARHIGLLTQAGKTIGDAIEAIENGVPIDMVQIDLTRTWEILGEITGDTVHESLIDQLFSQFCLGK.

Positions 22, 84, and 123 each coordinate (6S)-5-formyl-5,6,7,8-tetrahydrofolate. The TrmE-type G domain occupies 220–379 (GIATAIIGRP…LEKAIADLFF (160 aa)). Residue Asn-230 coordinates K(+). GTP-binding positions include 230 to 235 (NVGKSS), 249 to 255 (TDIAGTT), and 274 to 277 (DTAG). Ser-234 provides a ligand contact to Mg(2+). K(+)-binding residues include Thr-249, Ile-251, and Thr-254. Thr-255 contributes to the Mg(2+) binding site. Lys-458 is a binding site for (6S)-5-formyl-5,6,7,8-tetrahydrofolate.

It belongs to the TRAFAC class TrmE-Era-EngA-EngB-Septin-like GTPase superfamily. TrmE GTPase family. In terms of assembly, homodimer. Heterotetramer of two MnmE and two MnmG subunits. K(+) serves as cofactor.

Its subcellular location is the cytoplasm. Its function is as follows. Exhibits a very high intrinsic GTPase hydrolysis rate. Involved in the addition of a carboxymethylaminomethyl (cmnm) group at the wobble position (U34) of certain tRNAs, forming tRNA-cmnm(5)s(2)U34. The chain is tRNA modification GTPase MnmE from Bacillus thuringiensis (strain Al Hakam).